A 259-amino-acid chain; its full sequence is NAD kinase (259 aa).

The active-site Proton acceptor is Asp-43. NAD(+) is bound by residues 43 to 44, 111 to 112, and Arg-136; these read DG and NE.

This sequence belongs to the NAD kinase family. A divalent metal cation is required as a cofactor.

It is found in the cytoplasm. The catalysed reaction is NAD(+) + ATP = ADP + NADP(+) + H(+). Functionally, involved in the regulation of the intracellular balance of NAD and NADP, and is a key enzyme in the biosynthesis of NADP. Catalyzes specifically the phosphorylation on 2'-hydroxyl of the adenosine moiety of NAD to yield NADP. This chain is NAD kinase, found in Mycoplasma genitalium (strain ATCC 33530 / DSM 19775 / NCTC 10195 / G37) (Mycoplasmoides genitalium).